Consider the following 995-residue polypeptide: S1 RNA-binding domain-containing protein 1 (995 aa).

The interval 23–78 is disordered; it reads SFSELSSASEEDDKEDSAWEPQKKVPRSRKQPPPKESKPKRMPQVKKNAPQISDGS. Residue Lys-84 forms a Glycyl lysine isopeptide (Lys-Gly) (interchain with G-Cter in SUMO2) linkage. A compositionally biased stretch (basic residues) spans 116 to 132; the sequence is TKRKCAAQPHAVRRTKK. Residues 116-164 are disordered; the sequence is TKRKCAAQPHAVRRTKKLKVDEETSKASYLEGESNSSETPSTSTVWGGT. Residue Lys-134 forms a Glycyl lysine isopeptide (Lys-Gly) (interchain with G-Cter in SUMO2) linkage. Residues 146 to 159 show a composition bias toward low complexity; that stretch reads EGESNSSETPSTST. Glycyl lysine isopeptide (Lys-Gly) (interchain with G-Cter in SUMO2) cross-links involve residues Lys-166, Lys-167, and Lys-183. Lys-185 participates in a covalent cross-link: Glycyl lysine isopeptide (Lys-Gly) (interchain with G-Cter in SUMO1); alternate. Lys-185 is covalently cross-linked (Glycyl lysine isopeptide (Lys-Gly) (interchain with G-Cter in SUMO2); alternate). A coiled-coil region spans residues 258–288; that stretch reads ADSLREVQQTLEELRAVAKKVHSTIQKIKKE. Position 861 is a phosphoserine (Ser-861). The S1 motif domain occupies 919-992; it reads GTVLTGKVEN…PRSRITLDLI (74 aa). Lys-955 is covalently cross-linked (Glycyl lysine isopeptide (Lys-Gly) (interchain with G-Cter in SUMO2)). A Phosphoserine modification is found at Ser-964.

The sequence is that of S1 RNA-binding domain-containing protein 1 (SRBD1) from Pongo abelii (Sumatran orangutan).